A 25-amino-acid chain; its full sequence is Dermaseptin-DI5 (25 aa).

Belongs to the frog skin active peptide (FSAP) family. Dermaseptin subfamily. As to expression, expressed by the skin glands.

Its subcellular location is the secreted. Its function is as follows. Antibacterial peptide with activity against Gram-positive bacteria S.aureus and E.faecalis, and Gram-negative bacteria P.aeruginosa and E.coli. This Phyllomedusa distincta (Monkey frog) protein is Dermaseptin-DI5.